Reading from the N-terminus, the 239-residue chain is MHTPFIVALDFPSKHDVQQFLRPFSGTPLFVKVGMELYYQEGPAIIAMFKEQGHAVFLDLKLHDIPNTVKQAMKGLARLGVDLVNVHAAGGRRMMEAAIEGLDAGTPSGAARPRCIAVTQLTSTDERMLHEELWISQPLEETVSHYAALAQASGMDGVVCSANEATLIKERCGASFLAVTPGIRFADDSVHDQVRVVTPRKARALGADYIVIGRSITRAADPLAAYSRLQHEWNGGETE.

Substrate contacts are provided by residues D10, K32, 59–68, T122, R184, Q193, G213, and R214; that span reads DLKLHDIPNT. The Proton donor role is filled by K61.

It belongs to the OMP decarboxylase family. Type 1 subfamily. Homodimer.

The enzyme catalyses orotidine 5'-phosphate + H(+) = UMP + CO2. Its pathway is pyrimidine metabolism; UMP biosynthesis via de novo pathway; UMP from orotate: step 2/2. Catalyzes the decarboxylation of orotidine 5'-monophosphate (OMP) to uridine 5'-monophosphate (UMP). The protein is Orotidine 5'-phosphate decarboxylase of Geobacillus thermodenitrificans (strain NG80-2).